We begin with the raw amino-acid sequence, 141 residues long: MMPLVPLLLVSIVFPGIQATQLTRCELTEKLKELDGYRDISMSEWICTLFHTSGLDTKITVNNNGSTEYGIFQISDKLWCVSKQNPQSKNICDTPCENFLDDNLTDDVKCAMKILDKEGIDHWLAHKPLCSENLEQWVCKK.

A signal peptide spans Met1–Ala19. A C-type lysozyme domain is found at Thr20 to Lys141. Cystine bridges form between Cys25–Cys139, Cys47–Cys130, Cys80–Cys96, and Cys92–Cys110. An N-linked (GlcNAc...) asparagine glycan is attached at Asn64. Ca(2+)-binding residues include Asp101, Asp106, and Asp107.

Belongs to the glycosyl hydrolase 22 family. Lactose synthase (LS) is a heterodimer of a catalytic component, beta1,4-galactosyltransferase (beta4Gal-T1) and a regulatory component, alpha-lactalbumin (LA). In terms of tissue distribution, mammary gland specific. Secreted in milk.

The protein resides in the secreted. Regulatory subunit of lactose synthase, changes the substrate specificity of galactosyltransferase in the mammary gland making glucose a good acceptor substrate for this enzyme. This enables LS to synthesize lactose, the major carbohydrate component of milk. In other tissues, galactosyltransferase transfers galactose onto the N-acetylglucosamine of the oligosaccharide chains in glycoproteins. In Oryctolagus cuniculus (Rabbit), this protein is Alpha-lactalbumin (LALBA).